The following is a 222-amino-acid chain: Beta-casein (222 aa).

The first 15 residues, 1–15, serve as a signal peptide directing secretion; it reads MKVLILACLVALALA. T27 carries the post-translational modification Phosphothreonine. Residues S30, S32, S33, and S34 each carry the phosphoserine modification.

Belongs to the beta-casein family. Mammary gland specific. Secreted in milk.

It localises to the secreted. In terms of biological role, important role in determination of the surface properties of the casein micelles. The chain is Beta-casein (CSN2) from Ovis aries (Sheep).